We begin with the raw amino-acid sequence, 460 residues long: Cysteine--tRNA ligase (460 aa).

Cys-28 is a Zn(2+) binding site. A 'HIGH' region motif is present at residues 30 to 40 (MTVYDYCHLGH). The Zn(2+) site is built by Cys-209, His-234, and Glu-238. A 'KMSKS' region motif is present at residues 266–270 (KMSKS). Position 269 (Lys-269) interacts with ATP.

Belongs to the class-I aminoacyl-tRNA synthetase family. As to quaternary structure, monomer. Zn(2+) is required as a cofactor.

The protein localises to the cytoplasm. The enzyme catalyses tRNA(Cys) + L-cysteine + ATP = L-cysteinyl-tRNA(Cys) + AMP + diphosphate. The polypeptide is Cysteine--tRNA ligase (Pseudomonas aeruginosa (strain UCBPP-PA14)).